Here is a 210-residue protein sequence, read N- to C-terminus: Ribosomal RNA small subunit methyltransferase G (210 aa).

Residues Gly-74, Phe-79, 127-128, and Arg-143 each bind S-adenosyl-L-methionine; that span reads IE.

The protein belongs to the methyltransferase superfamily. RNA methyltransferase RsmG family.

The protein resides in the cytoplasm. The enzyme catalyses guanosine(527) in 16S rRNA + S-adenosyl-L-methionine = N(7)-methylguanosine(527) in 16S rRNA + S-adenosyl-L-homocysteine. In terms of biological role, specifically methylates the N7 position of guanine in position 527 of 16S rRNA. The polypeptide is Ribosomal RNA small subunit methyltransferase G (Chelativorans sp. (strain BNC1)).